A 456-amino-acid chain; its full sequence is UDP-N-acetylmuramate--L-alanine ligase (456 aa).

117–123 (GTHGKTT) provides a ligand contact to ATP.

The protein belongs to the MurCDEF family.

It is found in the cytoplasm. It catalyses the reaction UDP-N-acetyl-alpha-D-muramate + L-alanine + ATP = UDP-N-acetyl-alpha-D-muramoyl-L-alanine + ADP + phosphate + H(+). It participates in cell wall biogenesis; peptidoglycan biosynthesis. Its function is as follows. Cell wall formation. This Clostridium tetani (strain Massachusetts / E88) protein is UDP-N-acetylmuramate--L-alanine ligase.